The following is a 386-amino-acid chain: Delta(7)-sterol 5(6)-desaturase (386 aa).

Helical transmembrane passes span 119 to 139, 172 to 192, and 206 to 226; these read VLSL…IVAY, IPVM…GYSF, and AILW…YFLH. A Fatty acid hydroxylase domain is found at 214–337; that stretch reads FILFTDCGIY…FTTLWDRLGN (124 aa). Positions 226–230 match the Histidine box-1 motif; it reads HRWLH. Positions 239–243 match the Histidine box-2 motif; it reads HKPHH. The chain crosses the membrane as a helical span at residues 272–292; the sequence is PLLFPLHKVLYLLLFTFVNFW. The Histidine box-3 signature appears at 314 to 318; sequence HTVHH.

It belongs to the sterol desaturase family. The cofactor is Fe cation.

It localises to the endoplasmic reticulum membrane. The catalysed reaction is a Delta(7)-sterol + 2 Fe(II)-[cytochrome b5] + O2 + 2 H(+) = a Delta(5),Delta(7)-sterol + 2 Fe(III)-[cytochrome b5] + 2 H2O. The protein operates within steroid metabolism; ergosterol biosynthesis; ergosterol from zymosterol: step 3/5. Its function is as follows. Catalyzes the introduction of a C-5 double bond in the B ring of ergosterol. May contribute to the regulation of ergosterol biosynthesis. This Candida dubliniensis (strain CD36 / ATCC MYA-646 / CBS 7987 / NCPF 3949 / NRRL Y-17841) (Yeast) protein is Delta(7)-sterol 5(6)-desaturase (ERG3).